Reading from the N-terminus, the 141-residue chain is Putative pre-16S rRNA nuclease (141 aa).

Belongs to the YqgF nuclease family.

Its subcellular location is the cytoplasm. Its function is as follows. Could be a nuclease involved in processing of the 5'-end of pre-16S rRNA. This Coxiella burnetii (strain CbuK_Q154) (Coxiella burnetii (strain Q154)) protein is Putative pre-16S rRNA nuclease.